We begin with the raw amino-acid sequence, 479 residues long: Ribosomal RNA small subunit methyltransferase F (479 aa).

S-adenosyl-L-methionine contacts are provided by residues 125–131 (AAAPGSK), Glu149, Asp176, and Asp194. Cys247 acts as the Nucleophile in catalysis.

The protein belongs to the class I-like SAM-binding methyltransferase superfamily. RsmB/NOP family.

The protein localises to the cytoplasm. It catalyses the reaction cytidine(1407) in 16S rRNA + S-adenosyl-L-methionine = 5-methylcytidine(1407) in 16S rRNA + S-adenosyl-L-homocysteine + H(+). In terms of biological role, specifically methylates the cytosine at position 1407 (m5C1407) of 16S rRNA. This is Ribosomal RNA small subunit methyltransferase F from Escherichia coli O127:H6 (strain E2348/69 / EPEC).